The chain runs to 182 residues: Plasmolipin (182 aa).

Residues 1-35 (MAEFPSKVSTRTSSPAQGVGASVSALRPDLGFVRS) are Cytoplasmic-facing. Phosphoserine is present on Ser9. The MARVEL domain occupies 32-166 (FVRSALGVLA…SAFFSFQAWR (135 aa)). The chain crosses the membrane as a helical span at residues 36 to 56 (ALGVLALLQLALGLLVWALIA). The Extracellular portion of the chain corresponds to 57-68 (DTPYHLYPAYGW). The chain crosses the membrane as a helical span at residues 69-89 (VMFVAVFLWLVTIVFFIIYLF). The Cytoplasmic portion of the chain corresponds to 90–99 (QLHMKLYMVP). A helical membrane pass occupies residues 100–120 (WPLVLLIFFVAATVLYITAFI). Residues 121–141 (ACAAAVDLTSLRGSRPYNQRS) lie on the Extracellular side of the membrane. A helical membrane pass occupies residues 142 to 162 (AASFFACLVMIAYGVSAFFSF). At 163–182 (QAWRGVGSNAATSQMAGGYS) the chain is on the cytoplasmic side.

The protein belongs to the MAL family. In terms of assembly, forms oligomers. Post-translationally, phosphorylated.

It localises to the membrane. The protein localises to the cell membrane. Its subcellular location is the myelin membrane. The protein resides in the apical cell membrane. In terms of biological role, main component of the myelin sheath that plays an important role in myelin membrane biogenesis and myelination. Plays an essential function in apical endocytosis. Regulates epithelial development through the regulation of apical endocytosis. Part of the intracellular machinery that mediates basolateral-to-apical transport of ICAM-1, an essential adhesion receptor in epithelial cells, from the subapical compartment in hepatic epithelial cells. This Mus musculus (Mouse) protein is Plasmolipin (Pllp).